The following is a 236-amino-acid chain: Protein INCA1 (236 aa).

Residue Ser23 is modified to Phosphoserine. Residues 75 to 99 (GLYPPEQLPPPEMLWRRKKRRPCLE) form an interaction with CCNA1 and CCNA1/CDK2 complex; essential for CDK2 inhibitory activity region. The Nuclear localization signal motif lies at 90–95 (RRKKRR). Thr182 carries the post-translational modification Phosphothreonine. A phosphoserine mark is found at Ser191 and Ser194.

It belongs to the INCA family. As to quaternary structure, interacts with CCNA1. Interacts with CCNA2, CCNB1 and CCNE1. Found in a complex with CCNA1 and CDK2. Interacts with ZNF16; the interaction inhibits INCA1 activity and induces the cell cycle process. Interacts with SPACA9. Interacts with the CCNA1/CDK2 complex. Interacts with ING5, DAZAP2, RNF26, USP15, SPOUT1, DPH7, TRIM26 and RAB5C. In terms of processing, phosphorylated when part of a complex with CCNA1 and CDK2. Strongly phosphorylated by CDK2 on its C-terminal region spanning amino acid 149-221. Less intensively phosphorylated by CDK2 on its first 75 amino acid residues. In terms of tissue distribution, detected in testis, and at lower levels in ovary. Detected at very low levels in testis tumors. Down-regulated in bone marrow cells in acute myeloid and lymphoid leukemia patients as compared with normal bone marrow cells.

The protein localises to the nucleus. The protein resides in the cytoplasm. Functionally, binds to CDK2-bound cyclins and inhibits the kinase activity of CDK2; binding to cyclins is critical for its function as CDK inhibitor. Inhibits cell growth and cell proliferation and may play a role in cell cycle control. Required for ING5-mediated regulation of S-phase progression, enhancement of Fas-induced apoptosis and inhibition of cell growth. This is Protein INCA1 (INCA1) from Homo sapiens (Human).